The sequence spans 541 residues: Glucose-6-phosphate isomerase (541 aa).

The active-site Proton donor is the glutamate 354. Active-site residues include histidine 385 and lysine 505.

This sequence belongs to the GPI family.

It localises to the cytoplasm. The enzyme catalyses alpha-D-glucose 6-phosphate = beta-D-fructose 6-phosphate. It participates in carbohydrate biosynthesis; gluconeogenesis. The protein operates within carbohydrate degradation; glycolysis; D-glyceraldehyde 3-phosphate and glycerone phosphate from D-glucose: step 2/4. Catalyzes the reversible isomerization of glucose-6-phosphate to fructose-6-phosphate. In Cupriavidus metallidurans (strain ATCC 43123 / DSM 2839 / NBRC 102507 / CH34) (Ralstonia metallidurans), this protein is Glucose-6-phosphate isomerase.